The chain runs to 282 residues: Undecaprenyl-diphosphatase (282 aa).

Transmembrane regions (helical) follow at residues 96 to 116 (WMVI…KDII), 123 to 143 (MWIT…AEKW), 198 to 218 (FLLA…DAFA), 229 to 249 (QLAV…AWLL), and 260 to 280 (FAAY…TGML).

Belongs to the UppP family.

It is found in the cell membrane. It carries out the reaction di-trans,octa-cis-undecaprenyl diphosphate + H2O = di-trans,octa-cis-undecaprenyl phosphate + phosphate + H(+). Its function is as follows. Catalyzes the dephosphorylation of undecaprenyl diphosphate (UPP). Confers resistance to bacitracin. This is Undecaprenyl-diphosphatase from Corynebacterium diphtheriae (strain ATCC 700971 / NCTC 13129 / Biotype gravis).